The chain runs to 826 residues: Lethal(3)malignant brain tumor-like protein 1 (826 aa).

Position 136 is a phosphoserine (S136). Disordered regions lie at residues 167-197 and 220-271; these read LEPP…SGDR and LLKP…RSQL. The span at 242–256 shows a compositional bias: basic and acidic residues; that stretch reads EAVKQGEGKDAEREP. 3 MBT repeats span residues 280–380, 388–487, and 496–591; these read WSWE…LQLP, FSWS…LTPP, and FCWE…LEPP. Residues 453–460 form an interaction with monomethylated and dimethylated peptides region; it reads FDDWGDTY. The segment at 586-621 is disordered; the sequence is HPLEPPLRPRESSSVSPGGCPPLSHRSPPHTKTSKY. Over residues 612–621 the composition is skewed to basic residues; it reads SPPHTKTSKY. The segment at 619 to 662 adopts a CCHHC-type zinc-finger fold; that stretch reads SKYNFHHRKCPTPGCDGSGHVTGKFTAHHCLSGCPLAEKNQSRL. Zn(2+)-binding residues include C628, C633, H646, and C652. Residues 663–699 are disordered; that stretch reads KAELSDSETAARKKNPSNLSPRKKPRHQGRIGRPPKY. Basic residues predominate over residues 683–699; that stretch reads PRKKPRHQGRIGRPPKY. In terms of domain architecture, SAM spans 757–821; it reads WTIEEVFGFV…YNAILMFKNT (65 aa).

In terms of assembly, homodimer. Interacts with RB1/RB (when monomethylated at 'Lys-860'). Interacts with p53/TP53 (when monomethylated at 'Lys-382'). Interacts with CBX3, ETV6, KMT5A and VCP/p97. Ubiquitinated in a VCP/p97-dependent way following DNA damage, leading to its removal from DNA damage sites, promoting accessibility of H4K20me2 mark for DNA repair protein TP53BP1, which is then recruited to DNA damage sites. In terms of tissue distribution, highly expressed in brain, testis, eyes, and ES cells.

Its subcellular location is the nucleus. Its function is as follows. Polycomb group (PcG) protein that specifically recognizes and binds mono- and dimethyllysine residues on target proteins, thereby acting as a 'reader' of a network of post-translational modifications. PcG proteins maintain the transcriptionally repressive state of genes: acts as a chromatin compaction factor by recognizing and binding mono- and dimethylated histone H1b/H1-4 at 'Lys-26' (H1bK26me1 and H1bK26me2) and histone H4 at 'Lys-20' (H4K20me1 and H4K20me2), leading to condense chromatin and repress transcription. Recognizes and binds p53/TP53 monomethylated at 'Lys-382', leading to repress p53/TP53-target genes. Also recognizes and binds RB1/RB monomethylated at 'Lys-860'. Participates in the ETV6-mediated repression. Probably plays a role in cell proliferation. Overexpression induces multinucleated cells, suggesting that it is required to accomplish normal mitosis. The polypeptide is Lethal(3)malignant brain tumor-like protein 1 (L3mbtl1) (Mus musculus (Mouse)).